The following is a 419-amino-acid chain: L-rhamnose isomerase (419 aa).

Mn(2+) is bound by residues His262, Asp294, and Asp296.

This sequence belongs to the rhamnose isomerase family. In terms of assembly, homotetramer. The cofactor is Mn(2+).

It is found in the cytoplasm. It carries out the reaction L-rhamnopyranose = L-rhamnulose. Its pathway is carbohydrate degradation; L-rhamnose degradation; glycerone phosphate from L-rhamnose: step 1/3. In terms of biological role, catalyzes the interconversion of L-rhamnose and L-rhamnulose. The protein is L-rhamnose isomerase of Salmonella newport (strain SL254).